Consider the following 79-residue polypeptide: Small ribosomal subunit protein bS21 (79 aa).

Residues 58–79 (ARKKMQREGLLPMKPKPMPGMR) are disordered.

This sequence belongs to the bacterial ribosomal protein bS21 family.

This Beijerinckia indica subsp. indica (strain ATCC 9039 / DSM 1715 / NCIMB 8712) protein is Small ribosomal subunit protein bS21.